Here is a 407-residue protein sequence, read N- to C-terminus: WEB family protein At3g51720 (407 aa).

Coiled coils occupy residues Lys72–Asn99, Ser128–Ala217, and Glu247–Glu278.

The protein belongs to the WEB family.

The protein is WEB family protein At3g51720 of Arabidopsis thaliana (Mouse-ear cress).